Reading from the N-terminus, the 360-residue chain is NAD(P)H-quinone oxidoreductase subunit 1, chloroplastic (360 aa).

9 consecutive transmembrane segments (helical) span residues 27–47 (IWIF…VLVI), 98–118 (FSIG…VIPF), 129–149 (IGIF…LMSG), 165–185 (AAQS…ISLL), 203–223 (FWGW…ISSL), 248–268 (YSGI…LISS), 269–289 (LFVT…ISIL), 297–317 (IFGT…FLFI), and 340–360 (FLLP…LFSL).

This sequence belongs to the complex I subunit 1 family. In terms of assembly, NDH is composed of at least 16 different subunits, 5 of which are encoded in the nucleus.

The protein resides in the plastid. It localises to the chloroplast thylakoid membrane. It carries out the reaction a plastoquinone + NADH + (n+1) H(+)(in) = a plastoquinol + NAD(+) + n H(+)(out). The catalysed reaction is a plastoquinone + NADPH + (n+1) H(+)(in) = a plastoquinol + NADP(+) + n H(+)(out). Functionally, NDH shuttles electrons from NAD(P)H:plastoquinone, via FMN and iron-sulfur (Fe-S) centers, to quinones in the photosynthetic chain and possibly in a chloroplast respiratory chain. The immediate electron acceptor for the enzyme in this species is believed to be plastoquinone. Couples the redox reaction to proton translocation, and thus conserves the redox energy in a proton gradient. In Nasturtium officinale (Watercress), this protein is NAD(P)H-quinone oxidoreductase subunit 1, chloroplastic.